We begin with the raw amino-acid sequence, 68 residues long: Cytotoxic linear peptide (68 aa).

The first 23 residues, 1-23 (MKTQFAILLIALVLFQMFSQSEA), serve as a signal peptide directing secretion. Leu36 carries the leucine amide modification. Positions 40–68 (GLNELDDLDELFDGEISQADIDFLKELMS) are excised as a propeptide.

It belongs to the non-disulfide-bridged peptide (NDBP) superfamily. Short antimicrobial peptide (group 4) family. As to expression, expressed by the venom gland.

It localises to the secreted. It is found in the target cell membrane. In terms of biological role, amphipathic peptide that has antibacterial activities. The sequence is that of Cytotoxic linear peptide from Pandinus cavimanus (Tanzanian red clawed scorpion).